Here is a 170-residue protein sequence, read N- to C-terminus: Peptide deformylase (170 aa).

2 residues coordinate Fe cation: Cys-94 and His-136. Glu-137 is a catalytic residue. His-140 provides a ligand contact to Fe cation.

This sequence belongs to the polypeptide deformylase family. Fe(2+) serves as cofactor.

It carries out the reaction N-terminal N-formyl-L-methionyl-[peptide] + H2O = N-terminal L-methionyl-[peptide] + formate. Its function is as follows. Removes the formyl group from the N-terminal Met of newly synthesized proteins. Requires at least a dipeptide for an efficient rate of reaction. N-terminal L-methionine is a prerequisite for activity but the enzyme has broad specificity at other positions. The chain is Peptide deformylase from Xylella fastidiosa (strain 9a5c).